Reading from the N-terminus, the 256-residue chain is MSTLKLTLLQQPLVWLDAQANLRHFDMLLESIQQRDVIVLPEMFTTGFAMNAAENALPETEVIDWLRHWSVRTDALIGGSVALNTPDGAVNRFLLVQPDGTILRYDKRHLFRMAGEHHHYLAGKERKVVEWRGWRILPQVCYDLRFPVWSRNQQDYDLALYVANWPAARAKHWQTLLAARAIENQAYVAGCNRVGDDDNGHHYQGNSVILDALGEIQAQAEPGQAAQLDAELSLETLQAYRERFPAFHDTDKFLLL.

A CN hydrolase domain is found at 4–234; sequence LKLTLLQQPL…AAQLDAELSL (231 aa). Glutamate 42 (proton acceptor) is an active-site residue. The active site involves lysine 107. Catalysis depends on cysteine 141, which acts as the Nucleophile.

This sequence belongs to the carbon-nitrogen hydrolase superfamily. NIT1/NIT2 family.

It catalyses the reaction a monoamide of a dicarboxylate + H2O = a dicarboxylate + NH4(+). In terms of biological role, hydrolyzes alpha-ketoglutaramate (a-KGM) to alpha-ketoglutarate (alpha-KG) and ammonia (specific activity 21 umol/min/mg), has very weak activity on L-glutamine, and no activity on deaminated glutathione (dGSH) or glutathione. May function as a metabolite repair enzyme. The polypeptide is Omega-amidase YafV (Yersinia enterocolitica).